Here is a 381-residue protein sequence, read N- to C-terminus: MSQQPIRYEFIKACKQTGARLGRVHTPHGSFETPVFMPVGTLATVKTMSPEELKEMGADIILSNTYHLWLRPGHDIVKEAGGLHQFMNWNRAILTDSGGFQVFSLSEFRKIEEEGVHFRNHLNGDKLFLSPEKAMEIQNALGSDIMMAFDECPPYPAEYDYMKKSVERTSRWAERCLKAHNRPDEQGLFGIVQGGEYENLRKQSAKDLISLDFPGYAIGGLSVGEPKDVMNRVLEFTTPLLPADKPRYLMGVGSPDSLIDGAIRGVDMFDCVLPTRIARNGTLMTSEGRLVVKNAKYERDFRPIDEQCDCYTCRNYSRAYIRHLIRCNETFGIRLTSYHNLYFLLKLMGQVRDAIREDRLGDFREEFFERYGFNKPNAKSF.

The active-site Proton acceptor is the D96. Substrate is bound by residues 96 to 100 (DSGGF), D150, Q193, and G220. The RNA binding stretch occupies residues 251-257 (GVGSPDS). The active-site Nucleophile is the D270. Residues 275 to 279 (TRIAR) are RNA binding; important for wobble base 34 recognition. Zn(2+) is bound by residues C308, C310, C313, and H339.

It belongs to the queuine tRNA-ribosyltransferase family. As to quaternary structure, homodimer. Within each dimer, one monomer is responsible for RNA recognition and catalysis, while the other monomer binds to the replacement base PreQ1. Requires Zn(2+) as cofactor.

The enzyme catalyses 7-aminomethyl-7-carbaguanine + guanosine(34) in tRNA = 7-aminomethyl-7-carbaguanosine(34) in tRNA + guanine. It functions in the pathway tRNA modification; tRNA-queuosine biosynthesis. Functionally, catalyzes the base-exchange of a guanine (G) residue with the queuine precursor 7-aminomethyl-7-deazaguanine (PreQ1) at position 34 (anticodon wobble position) in tRNAs with GU(N) anticodons (tRNA-Asp, -Asn, -His and -Tyr). Catalysis occurs through a double-displacement mechanism. The nucleophile active site attacks the C1' of nucleotide 34 to detach the guanine base from the RNA, forming a covalent enzyme-RNA intermediate. The proton acceptor active site deprotonates the incoming PreQ1, allowing a nucleophilic attack on the C1' of the ribose to form the product. After dissociation, two additional enzymatic reactions on the tRNA convert PreQ1 to queuine (Q), resulting in the hypermodified nucleoside queuosine (7-(((4,5-cis-dihydroxy-2-cyclopenten-1-yl)amino)methyl)-7-deazaguanosine). In Bacillus licheniformis (strain ATCC 14580 / DSM 13 / JCM 2505 / CCUG 7422 / NBRC 12200 / NCIMB 9375 / NCTC 10341 / NRRL NRS-1264 / Gibson 46), this protein is Queuine tRNA-ribosyltransferase.